The sequence spans 409 residues: Serine/threonine transporter SstT (409 aa).

The next 9 helical transmembrane spans lie at 17-37, 49-69, 83-103, 142-162, 180-200, 218-238, 299-319, 331-351, and 357-377; these read LVVQ…FFPA, FVSA…MASI, ILLL…IASF, ALIS…GIAF, VSLI…GLVA, LVVL…LIVF, MAGA…TLGI, VVAS…LLLI, and LFGI…IIAI.

Belongs to the dicarboxylate/amino acid:cation symporter (DAACS) (TC 2.A.23) family.

The protein localises to the cell inner membrane. It catalyses the reaction L-serine(in) + Na(+)(in) = L-serine(out) + Na(+)(out). The catalysed reaction is L-threonine(in) + Na(+)(in) = L-threonine(out) + Na(+)(out). Functionally, involved in the import of serine and threonine into the cell, with the concomitant import of sodium (symport system). This is Serine/threonine transporter SstT from Pseudomonas paraeruginosa (strain DSM 24068 / PA7) (Pseudomonas aeruginosa (strain PA7)).